Consider the following 335-residue polypeptide: L-threo-3-deoxy-hexylosonate aldolase (335 aa).

Residue 50–51 (SN) participates in substrate binding. K175 serves as the catalytic Schiff-base intermediate with substrate.

The protein belongs to the DapA family.

The enzyme catalyses 2-dehydro-3-deoxy-L-galactonate = L-glyceraldehyde + pyruvate. The protein operates within carbohydrate acid metabolism. Mediates the conversion of 2-dehydro-3-deoxy-L-galactonate to pyruvate and L-glyceraldehyde in D-galacturonate catabolic process. This chain is L-threo-3-deoxy-hexylosonate aldolase (gaaC), found in Aspergillus niger.